Here is a 279-residue protein sequence, read N- to C-terminus: Energy-coupling factor transporter ATP-binding protein EcfA1 (279 aa).

Residues 6-240 form the ABC transporter domain; the sequence is LSIEGVSFRY…GSKLERIGLD (235 aa). 40 to 47 serves as a coordination point for ATP; sequence GHNGSGKS.

The protein belongs to the ABC transporter superfamily. Energy-coupling factor EcfA family. As to quaternary structure, forms a stable energy-coupling factor (ECF) transporter complex composed of 2 membrane-embedded substrate-binding proteins (S component), 2 ATP-binding proteins (A component) and 2 transmembrane proteins (T component).

It localises to the cell membrane. Functionally, ATP-binding (A) component of a common energy-coupling factor (ECF) ABC-transporter complex. Unlike classic ABC transporters this ECF transporter provides the energy necessary to transport a number of different substrates. The protein is Energy-coupling factor transporter ATP-binding protein EcfA1 of Geobacillus kaustophilus (strain HTA426).